The primary structure comprises 239 residues: MKLSMTLSLFAATAMGQTMCSQYDSASSPPYSVNQNLWGEYQGTGSQCVYVDKLSSSGASWHTKWTWSGGEGTVKSYSNSGLTFDKKLVSDVSSIPTSVTWSQDDTNVQADVSYDLFTAANADHATSSGDYELMIWLARYGSVQPIGKQIATATVGGKSWEVWYGTSTQAGAEQKTYSFVAGSPINSWSGDIKDFFNYLTQNQGFPASSQHLITLQFGTEPFTGGPATFTVDNWTASVN.

The N-terminal stretch at 1–16 (MKLSMTLSLFAATAMG) is a signal peptide.

This sequence belongs to the glycosyl hydrolase 12 (cellulase H) family.

It carries out the reaction Endohydrolysis of (1-&gt;4)-beta-D-glucosidic linkages in cellulose, lichenin and cereal beta-D-glucans.. Its function is as follows. Has carboxylmethylcellulase activity. This chain is Endoglucanase A (cekA), found in Aspergillus kawachii (strain NBRC 4308) (White koji mold).